Here is a 245-residue protein sequence, read N- to C-terminus: UDP-2,3-diacylglucosamine hydrolase (245 aa).

Residues aspartate 8, histidine 10, aspartate 41, asparagine 79, and histidine 114 each coordinate Mn(2+). 79 to 80 (NR) provides a ligand contact to substrate. Residues aspartate 122, serine 160, lysine 164, lysine 167, and histidine 195 each contribute to the substrate site. Mn(2+)-binding residues include histidine 195 and histidine 197.

The protein belongs to the LpxH family. It depends on Mn(2+) as a cofactor.

It is found in the cell inner membrane. The catalysed reaction is UDP-2-N,3-O-bis[(3R)-3-hydroxytetradecanoyl]-alpha-D-glucosamine + H2O = 2-N,3-O-bis[(3R)-3-hydroxytetradecanoyl]-alpha-D-glucosaminyl 1-phosphate + UMP + 2 H(+). It functions in the pathway glycolipid biosynthesis; lipid IV(A) biosynthesis; lipid IV(A) from (3R)-3-hydroxytetradecanoyl-[acyl-carrier-protein] and UDP-N-acetyl-alpha-D-glucosamine: step 4/6. Functionally, hydrolyzes the pyrophosphate bond of UDP-2,3-diacylglucosamine to yield 2,3-diacylglucosamine 1-phosphate (lipid X) and UMP by catalyzing the attack of water at the alpha-P atom. Involved in the biosynthesis of lipid A, a phosphorylated glycolipid that anchors the lipopolysaccharide to the outer membrane of the cell. This chain is UDP-2,3-diacylglucosamine hydrolase, found in Aromatoleum aromaticum (strain DSM 19018 / LMG 30748 / EbN1) (Azoarcus sp. (strain EbN1)).